Consider the following 82-residue polypeptide: Consomatin Ar1 (82 aa).

The signal sequence occupies residues 1-22 (MQTAYWVVVMMMMVWVTAPVSE). Residues 23-60 (GGKLSDVIWGLVPDDLTPQIILQILNASRHAYRRVRPR) constitute a propeptide that is removed on maturation. The cysteines at positions 64 and 69 are disulfide-linked. Trp66 is subject to D-tryptophan. Pro70, Pro71, and Pro73 each carry 4-hydroxyproline. Residues 74 to 82 (QWIHPLVKR) constitute a propeptide that is removed on maturation.

The protein belongs to the conotoxin C superfamily. Consomatin family. In terms of tissue distribution, expressed by the venom duct.

The protein resides in the secreted. In terms of biological role, moderately activates human somatostatin receptors (SSTR) with a preferential activation of SSTR1 and SSTR4. In vivo, does not cause behavioral changes in mice within a few minutes of intracranial injection, but causes a progressive loss of movement thereafter. Four to five hours after injection, mice recover, even with the highest dose tested. Shows antinociception and antihyperalgesia activities in two mouse models of acute pain, most probably by acting outside the central nervous system. The protein is Consomatin Ar1 of Conus arenatus (Sand-dusted cone).